A 776-amino-acid polypeptide reads, in one-letter code: Systemic RNA interference defective protein 1 (776 aa).

Positions 1–17 (MIRVYLIILMHLVIGLT) are cleaved as a signal peptide. At 18 to 319 (QNNSTTPSPI…ENQSYAVPTA (302 aa)) the chain is on the extracellular side. Asn-19, Asn-20, Asn-32, Asn-205, Asn-210, Asn-234, Asn-290, and Asn-311 each carry an N-linked (GlcNAc...) asparagine glycan. The interval 22-312 (TTPSPIITSS…SFEFKKLENQ (291 aa)) is involved in dsRNA-binding. A helical transmembrane segment spans residues 320-340 (LMMIFLTTPCLLFLPIVINII). Residues 341–429 (KNSRKLAPSQ…KQDSLSLHGQ (89 aa)) lie on the Cytoplasmic side of the membrane. Residues 360 to 390 (PSEQRDMDLSHDEQQNTSSELENNGEIPAAE) are disordered. Residues 362–373 (EQRDMDLSHDEQ) show a composition bias toward basic and acidic residues. Residues 430–450 (MLQYPVAIILPVLMHTAIEFH) traverse the membrane as a helical segment. Residues 451-481 (KWTTSTMANRDEMCFHNHACARPLGELRAWN) lie on the Extracellular side of the membrane. The helical transmembrane segment at 482–502 (NIITNIGYTLYGAIFIVLSIC) threads the bilayer. Topologically, residues 503-510 (RRGRHEYS) are cytoplasmic. Residues 511–531 (HVFGTYECTLLDVTIGVFMVL) form a helical membrane-spanning segment. Residues 532–543 (QSIASATYHICP) are Extracellular-facing. Residues 544 to 564 (SDVAFQFDTPCIQVICGLLMV) traverse the membrane as a helical segment. The Cytoplasmic portion of the chain corresponds to 565–575 (RQWFVRHESPS). A helical membrane pass occupies residues 576–596 (PAYTNILLVGVVSLNFLISAF). Over 597–599 (SKT) the chain is Extracellular. A helical transmembrane segment spans residues 600 to 620 (SYVRFIIAVIHVIVVGSICLA). Residues 621–633 (KERSLGSEKLKTR) lie on the Cytoplasmic side of the membrane. A helical membrane pass occupies residues 634–654 (FFIMAFSMGNFAAIVMYLTLS). Over 655–659 (AFHLN) the chain is Extracellular. A helical transmembrane segment spans residues 660–680 (QIATYCFIINCIMYLMYYGCM). Residues 681 to 691 (KVLHSERITSK) lie on the Cytoplasmic side of the membrane. A helical membrane pass occupies residues 692 to 712 (AKLCGALSLLAWAVAGFFFFQ). Over 713 to 741 (DDTDWTRSAAASRALNKPCLLLGFFGSHD) the chain is Extracellular. The helical transmembrane segment at 742–762 (LWHIFGALAGLFTFIFVSFVD) threads the bilayer. Over 763 to 776 (DDLINTRKTSINIF) the chain is Cytoplasmic.

This sequence belongs to the SID1 family. As to quaternary structure, may self-associate to form multimers. As to expression, expressed in most non-neuronal cells, including body wall muscle cells.

It is found in the cell membrane. In terms of biological role, plays a role in RNA-mediated gene silencing by acting cell-autonomously as a channel for the transport of double-stranded RNA (dsRNA) between cells. Mediates the spread of dsRNA and subsequent silencing of genes in cells distant from the site of dsRNA introduction. Selective for dsRNA. Preferentially binds long dsRNA, from 50 base pairs up to 700. Short 20 base-pair long molecules are not bound. May also bind dsDNA, but with lower affinity. Binding may be sequence-independent. Required for avoidance behavior induced by small RNAs derived from pathogenic bacteria such as P.aeruginosa. In Caenorhabditis elegans, this protein is Systemic RNA interference defective protein 1.